A 259-amino-acid chain; its full sequence is Anti-Pycsar protein Apyc1 (259 aa).

The segment at 21-233 is beta-lactamase-like; sequence YNNSALVTFT…KQQNKIFLMH (213 aa). The Zn(2+) site is built by histidine 64, histidine 66, aspartate 68, histidine 69, histidine 154, aspartate 178, and histidine 233.

It belongs to the anti-Pycsar protein Apyc1 family. In terms of assembly, homodimer. The cofactor is Zn(2+).

It carries out the reaction 3',5'-cyclic CMP + H2O = CMP + H(+). The catalysed reaction is 3',5'-cyclic UMP + H2O = UMP + H(+). Functionally, counteracts the host Pycsar antiviral defense system. Phosphodiesterase that enables metal-dependent hydrolysis of host cyclic nucleotide Pycsar defense signals such as cCMP and cUMP. This Bacillus phage vB_BveM-Goe7 protein is Anti-Pycsar protein Apyc1.